The chain runs to 134 residues: Acyl carrier protein, mitochondrial (134 aa).

Residues 1–46 (MFRTAALTAARVARPAVASAVRAGVARPAFVQAVPKVAAFQAVRFY) constitute a mitochondrion transit peptide. In terms of domain architecture, Carrier spans 55 to 131 (DEVFSRIAQV…KAVEYILSQP (77 aa)). Ser-91 bears the O-(pantetheine 4'-phosphoryl)serine mark.

It belongs to the acyl carrier protein (ACP) family. As to quaternary structure, complex I is composed of about 30 different subunits. 4'-phosphopantetheine is transferred from CoA to a specific serine of apo-ACP by acpS. This modification is essential for activity because fatty acids are bound in thioester linkage to the sulfhydryl of the prosthetic group.

The protein localises to the mitochondrion. Its pathway is lipid metabolism; fatty acid biosynthesis. Its function is as follows. Carrier of the growing fatty acid chain in fatty acid biosynthesis. May be involved in the synthesis of very-long-chain fatty acids. Accessory and non-catalytic subunit of the mitochondrial membrane respiratory chain NADH dehydrogenase (Complex I), which functions in the transfer of electrons from NADH to the respiratory chain. This is Acyl carrier protein, mitochondrial (nuo-12) from Neurospora crassa (strain ATCC 24698 / 74-OR23-1A / CBS 708.71 / DSM 1257 / FGSC 987).